The sequence spans 429 residues: Glutamate-1-semialdehyde 2,1-aminomutase 2 (429 aa).

Residue lysine 267 is modified to N6-(pyridoxal phosphate)lysine.

Belongs to the class-III pyridoxal-phosphate-dependent aminotransferase family. HemL subfamily. In terms of assembly, homodimer. It depends on pyridoxal 5'-phosphate as a cofactor.

It localises to the cytoplasm. The catalysed reaction is (S)-4-amino-5-oxopentanoate = 5-aminolevulinate. The protein operates within porphyrin-containing compound metabolism; protoporphyrin-IX biosynthesis; 5-aminolevulinate from L-glutamyl-tRNA(Glu): step 2/2. This chain is Glutamate-1-semialdehyde 2,1-aminomutase 2 (gsaB), found in Bacillus subtilis (strain 168).